The primary structure comprises 509 residues: Ribonuclease Y (509 aa).

Residues 1-21 (MIILVAVVTAVISFGLGYVVA) form a helical membrane-spanning segment. A KH domain is found at 199 to 259 (TVSTVSLPSD…IRREIARLTL (61 aa)). The HD domain maps to 325–418 (VLDHSIEVAQ…VAAADALSAA (94 aa)).

Belongs to the RNase Y family.

It localises to the cell membrane. Endoribonuclease that initiates mRNA decay. This is Ribonuclease Y from Pseudothermotoga lettingae (strain ATCC BAA-301 / DSM 14385 / NBRC 107922 / TMO) (Thermotoga lettingae).